The sequence spans 619 residues: Pentatricopeptide repeat-containing protein At1g68980, mitochondrial (619 aa).

The N-terminal 100 residues, M1–I100, are a transit peptide targeting the mitochondrion. PPR repeat units lie at residues D186–P221, D222–S256, R257–S292, S295–S329, G366–L400, D401–D435, L436–D466, K472–P506, N507–L541, and E542–V576.

The protein belongs to the PPR family. P subfamily.

Its subcellular location is the mitochondrion. This is Pentatricopeptide repeat-containing protein At1g68980, mitochondrial from Arabidopsis thaliana (Mouse-ear cress).